We begin with the raw amino-acid sequence, 37 residues long: Large ribosomal subunit protein bL36A (37 aa).

This sequence belongs to the bacterial ribosomal protein bL36 family.

The chain is Large ribosomal subunit protein bL36A from Haemophilus ducreyi (strain 35000HP / ATCC 700724).